We begin with the raw amino-acid sequence, 455 residues long: MDMANQLLDELAHGNFSHLTLNLSQNGREIAILQKQLTGFDDKQLETFVEQHPAMPNDTRFKIMCTSFLNYARDVDPWSAWSSSDLIFEFYQCLINCLINDNAPHIEMLIPVATRETEFIINLAGKLDSFHLQLHTRSHQFLSHISSILSRLFNSIKPPRGNASSTNIPGKQRILLYLVNKLNNIYFRIESPQLCSNIFKNFQPKSMLAHFNEYQLDQQIEYRYLLGRYYLLNSQVHNAFVQFNEAFQSLLNLPLTNQAITRNGTRILNYMIPTGLILGKMVKWGPLRPFLSQETIDNWSVLYKHVRYGNIQGVSLWLRQNERHLCARQLLIVLLEKLPMVTYRNLIKTVIKSWTTEWGQNKLPYSLIERVLQLSIGPTFEDPGAQEITIYNGIHSPKNVENVLVTLINLGLLRANCFPQLQLCVVKKTTMIQEIVPPVNERITKMFPAHSHVLW.

Residues isoleucine 220–methionine 431 enclose the PCI domain.

Heterodimer with THP1. The SAC3-THP1 complex interacts with CDC31 and SUS1, and with the mRNA export factor MEX67-MTR2, the TREX complex component SUB2, and the nucleoporin NUP1.

Its subcellular location is the nucleus envelope. Component of the SAC3-THP1 complex, which functions in transcription-coupled mRNA export from the nucleus to the cytoplasm. SAC3-THP1 functions in docking export-competent ribonucleoprotein particles (mRNPs) to the nuclear entrance of the nuclear pore complex (nuclear basket), by association with components of the nuclear mRNA export machinery (MEX67-MTR2 and SUB2) in the nucleoplasm and the nucleoporin NUP1 at the nuclear basket. THP1 binds to RNA in vitro. This Saccharomyces cerevisiae (strain ATCC 204508 / S288c) (Baker's yeast) protein is Nuclear mRNA export protein THP1 (THP1).